The sequence spans 1271 residues: ATP-dependent helicase/nuclease subunit A (1271 aa).

The UvrD-like helicase ATP-binding domain occupies 3-476 (TKWTEEQELA…IMLYKNFRSR (474 aa)). ATP is bound at residue 24-31 (AAAGSGKT). The UvrD-like helicase C-terminal domain maps to 528 to 824 (IENLKVAGDI…RIMSIHKSKG (297 aa)).

It belongs to the helicase family. AddA subfamily. Heterodimer of AddA and AddB/RexB. It depends on Mg(2+) as a cofactor.

It catalyses the reaction Couples ATP hydrolysis with the unwinding of duplex DNA by translocating in the 3'-5' direction.. The enzyme catalyses ATP + H2O = ADP + phosphate + H(+). Its function is as follows. The heterodimer acts as both an ATP-dependent DNA helicase and an ATP-dependent, dual-direction single-stranded exonuclease. Recognizes the chi site generating a DNA molecule suitable for the initiation of homologous recombination. The AddA nuclease domain is required for chi fragment generation; this subunit has the helicase and 3' -&gt; 5' nuclease activities. The protein is ATP-dependent helicase/nuclease subunit A of Clostridium perfringens (strain ATCC 13124 / DSM 756 / JCM 1290 / NCIMB 6125 / NCTC 8237 / Type A).